The following is a 356-amino-acid chain: Glucose 1-dehydrogenase (356 aa).

The segment at 1–26 (MDAIVVSKADRTPRLVDRPRPDPTPG) is disordered. Basic and acidic residues predominate over residues 8 to 21 (KADRTPRLVDRPRP). Position 38 (Asp38) interacts with Zn(2+). Residue Thr40 participates in substrate binding. The Zn(2+) site is built by His63 and Glu64. The tract at residues 86-107 (TVRRPRGDPTPQFDRGQPDMAA) is disordered. 2 residues coordinate substrate: Glu113 and Glu149. Glu149 lines the Zn(2+) pocket. NADP(+) is bound by residues 180-183 (NGSL), 205-206 (RR), 270-272 (LGV), and 300-302 (SVN). Position 302 (Asn302) interacts with substrate.

The protein belongs to the zinc-containing alcohol dehydrogenase family. Glucose 1-dehydrogenase subfamily. The cofactor is Zn(2+).

The enzyme catalyses D-glucose + NAD(+) = D-glucono-1,5-lactone + NADH + H(+). It carries out the reaction D-glucose + NADP(+) = D-glucono-1,5-lactone + NADPH + H(+). In terms of biological role, catalyzes the NAD(P)(+)-dependent oxidation of D-glucose to D-gluconate via gluconolactone. Can utilize both NAD(+) and NADP(+) as electron acceptor. Is involved in the degradation of glucose through a modified Entner-Doudoroff pathway. The chain is Glucose 1-dehydrogenase from Halobacterium salinarum (strain ATCC 700922 / JCM 11081 / NRC-1) (Halobacterium halobium).